Reading from the N-terminus, the 269-residue chain is Indole-3-glycerol phosphate synthase (269 aa).

Belongs to the TrpC family.

The catalysed reaction is 1-(2-carboxyphenylamino)-1-deoxy-D-ribulose 5-phosphate + H(+) = (1S,2R)-1-C-(indol-3-yl)glycerol 3-phosphate + CO2 + H2O. It participates in amino-acid biosynthesis; L-tryptophan biosynthesis; L-tryptophan from chorismate: step 4/5. This Saccharopolyspora erythraea (strain ATCC 11635 / DSM 40517 / JCM 4748 / NBRC 13426 / NCIMB 8594 / NRRL 2338) protein is Indole-3-glycerol phosphate synthase.